The following is a 59-amino-acid chain: UPF0434 protein VC_1876 (59 aa).

It belongs to the UPF0434 family.

This chain is UPF0434 protein VC_1876, found in Vibrio cholerae serotype O1 (strain ATCC 39315 / El Tor Inaba N16961).